Reading from the N-terminus, the 213-residue chain is Orotate phosphoribosyltransferase (213 aa).

Residue Lys26 participates in 5-phospho-alpha-D-ribose 1-diphosphate binding. Phe34–Phe35 contacts orotate. Residues Tyr72 to Lys73, Arg99, Lys100, Lys103, His105, and Asp124 to Ala132 each bind 5-phospho-alpha-D-ribose 1-diphosphate. Orotate is bound by residues Thr128 and Arg156.

It belongs to the purine/pyrimidine phosphoribosyltransferase family. PyrE subfamily. Homodimer. It depends on Mg(2+) as a cofactor.

The catalysed reaction is orotidine 5'-phosphate + diphosphate = orotate + 5-phospho-alpha-D-ribose 1-diphosphate. It participates in pyrimidine metabolism; UMP biosynthesis via de novo pathway; UMP from orotate: step 1/2. Its function is as follows. Catalyzes the transfer of a ribosyl phosphate group from 5-phosphoribose 1-diphosphate to orotate, leading to the formation of orotidine monophosphate (OMP). The sequence is that of Orotate phosphoribosyltransferase from Haemophilus influenzae (strain ATCC 51907 / DSM 11121 / KW20 / Rd).